A 359-amino-acid chain; its full sequence is Heat-inducible transcription repressor HrcA (359 aa).

The protein belongs to the HrcA family.

Its function is as follows. Negative regulator of class I heat shock genes (grpE-dnaK-dnaJ and groELS operons). Prevents heat-shock induction of these operons. The protein is Heat-inducible transcription repressor HrcA of Rhizobium meliloti (strain 1021) (Ensifer meliloti).